The primary structure comprises 169 residues: Crossover junction endodeoxyribonuclease RuvC (169 aa).

Residues aspartate 11, glutamate 71, and aspartate 143 contribute to the active site. Aspartate 11, glutamate 71, and aspartate 143 together coordinate Mg(2+).

This sequence belongs to the RuvC family. In terms of assembly, homodimer which binds Holliday junction (HJ) DNA. The HJ becomes 2-fold symmetrical on binding to RuvC with unstacked arms; it has a different conformation from HJ DNA in complex with RuvA. In the full resolvosome a probable DNA-RuvA(4)-RuvB(12)-RuvC(2) complex forms which resolves the HJ. Requires Mg(2+) as cofactor.

It is found in the cytoplasm. It carries out the reaction Endonucleolytic cleavage at a junction such as a reciprocal single-stranded crossover between two homologous DNA duplexes (Holliday junction).. The RuvA-RuvB-RuvC complex processes Holliday junction (HJ) DNA during genetic recombination and DNA repair. Endonuclease that resolves HJ intermediates. Cleaves cruciform DNA by making single-stranded nicks across the HJ at symmetrical positions within the homologous arms, yielding a 5'-phosphate and a 3'-hydroxyl group; requires a central core of homology in the junction. The consensus cleavage sequence is 5'-(A/T)TT(C/G)-3'. Cleavage occurs on the 3'-side of the TT dinucleotide at the point of strand exchange. HJ branch migration catalyzed by RuvA-RuvB allows RuvC to scan DNA until it finds its consensus sequence, where it cleaves and resolves the cruciform DNA. In Bartonella henselae (strain ATCC 49882 / DSM 28221 / CCUG 30454 / Houston 1) (Rochalimaea henselae), this protein is Crossover junction endodeoxyribonuclease RuvC.